The sequence spans 129 residues: Ropporin-1 (129 aa).

The 24-residue stretch at 11-34 (PELPELLKTQPPDLIQWAAEYFGA) folds into the RIIa domain.

This sequence belongs to the ropporin family. Homodimer. Interacts with AKAP3. May interact with SPA17. Interacts with RHPN1. Interacts with FSCB; the interaction increases upon spermatozoa capacitation conditions. Interacts with CFAP61. Sumoylated, sumoylation decreases upon spermatozoa capacitation conditions.

It is found in the cell projection. It localises to the cilium. The protein resides in the flagellum. Its function is as follows. Important for male fertility. With ROPN1L, involved in fibrous sheath integrity and sperm motility, plays a role in PKA-dependent signaling processes required for spermatozoa capacitation. This chain is Ropporin-1, found in Mesocricetus auratus (Golden hamster).